The sequence spans 60 residues: Large ribosomal subunit protein bL32 (60 aa).

The tract at residues 1 to 21 (MAVPARHTSKAKKNKRRTHYK) is disordered. Residues 7-20 (HTSKAKKNKRRTHY) are compositionally biased toward basic residues.

This sequence belongs to the bacterial ribosomal protein bL32 family.

The chain is Large ribosomal subunit protein bL32 from Streptococcus thermophilus (strain ATCC BAA-250 / LMG 18311).